The following is a 347-amino-acid chain: S-adenosylmethionine:tRNA ribosyltransferase-isomerase (347 aa).

This sequence belongs to the QueA family. As to quaternary structure, monomer.

It is found in the cytoplasm. It carries out the reaction 7-aminomethyl-7-carbaguanosine(34) in tRNA + S-adenosyl-L-methionine = epoxyqueuosine(34) in tRNA + adenine + L-methionine + 2 H(+). Its pathway is tRNA modification; tRNA-queuosine biosynthesis. Transfers and isomerizes the ribose moiety from AdoMet to the 7-aminomethyl group of 7-deazaguanine (preQ1-tRNA) to give epoxyqueuosine (oQ-tRNA). This chain is S-adenosylmethionine:tRNA ribosyltransferase-isomerase, found in Bordetella parapertussis (strain 12822 / ATCC BAA-587 / NCTC 13253).